Reading from the N-terminus, the 286-residue chain is Formamidopyrimidine-DNA glycosylase (286 aa).

P2 (schiff-base intermediate with DNA) is an active-site residue. E3 acts as the Proton donor in catalysis. Residue K60 is the Proton donor; for beta-elimination activity of the active site. DNA is bound by residues H103, R122, and R167. The segment at 252-286 (WVYRRNQKPCRKCGTLIEKTKVAGRSTHWCPNCQN) adopts an FPG-type zinc-finger fold. The active-site Proton donor; for delta-elimination activity is the R276.

Belongs to the FPG family. Monomer. Zn(2+) serves as cofactor.

It carries out the reaction Hydrolysis of DNA containing ring-opened 7-methylguanine residues, releasing 2,6-diamino-4-hydroxy-5-(N-methyl)formamidopyrimidine.. The catalysed reaction is 2'-deoxyribonucleotide-(2'-deoxyribose 5'-phosphate)-2'-deoxyribonucleotide-DNA = a 3'-end 2'-deoxyribonucleotide-(2,3-dehydro-2,3-deoxyribose 5'-phosphate)-DNA + a 5'-end 5'-phospho-2'-deoxyribonucleoside-DNA + H(+). Its function is as follows. Involved in base excision repair of DNA damaged by oxidation or by mutagenic agents. Acts as a DNA glycosylase that recognizes and removes damaged bases. Has a preference for oxidized purines, such as 7,8-dihydro-8-oxoguanine (8-oxoG). Has AP (apurinic/apyrimidinic) lyase activity and introduces nicks in the DNA strand. Cleaves the DNA backbone by beta-delta elimination to generate a single-strand break at the site of the removed base with both 3'- and 5'-phosphates. This is Formamidopyrimidine-DNA glycosylase from Prochlorococcus marinus (strain MIT 9211).